A 436-amino-acid chain; its full sequence is 3-ketoacyl-CoA thiolase (436 aa).

C99 serves as the catalytic Acyl-thioester intermediate. Catalysis depends on proton acceptor residues H392 and C422.

The protein belongs to the thiolase-like superfamily. Thiolase family. Heterotetramer of two alpha chains (FadJ) and two beta chains (FadI).

It localises to the cytoplasm. It catalyses the reaction an acyl-CoA + acetyl-CoA = a 3-oxoacyl-CoA + CoA. It functions in the pathway lipid metabolism; fatty acid beta-oxidation. Catalyzes the final step of fatty acid oxidation in which acetyl-CoA is released and the CoA ester of a fatty acid two carbons shorter is formed. In Salmonella paratyphi B (strain ATCC BAA-1250 / SPB7), this protein is 3-ketoacyl-CoA thiolase.